Reading from the N-terminus, the 252-residue chain is Large ribosomal subunit protein uL4 (252 aa).

It belongs to the universal ribosomal protein uL4 family. Part of the 50S ribosomal subunit.

One of the primary rRNA binding proteins, this protein initially binds near the 5'-end of the 23S rRNA. It is important during the early stages of 50S assembly. It makes multiple contacts with different domains of the 23S rRNA in the assembled 50S subunit and ribosome. Functionally, forms part of the polypeptide exit tunnel. The protein is Large ribosomal subunit protein uL4 of Methanococcus maripaludis (strain C6 / ATCC BAA-1332).